Consider the following 324-residue polypeptide: Methionyl-tRNA formyltransferase (324 aa).

114-117 (SLLP) provides a ligand contact to (6S)-5,6,7,8-tetrahydrofolate.

The protein belongs to the Fmt family.

It catalyses the reaction L-methionyl-tRNA(fMet) + (6R)-10-formyltetrahydrofolate = N-formyl-L-methionyl-tRNA(fMet) + (6S)-5,6,7,8-tetrahydrofolate + H(+). In terms of biological role, attaches a formyl group to the free amino group of methionyl-tRNA(fMet). The formyl group appears to play a dual role in the initiator identity of N-formylmethionyl-tRNA by promoting its recognition by IF2 and preventing the misappropriation of this tRNA by the elongation apparatus. This is Methionyl-tRNA formyltransferase from Phocaeicola vulgatus (strain ATCC 8482 / DSM 1447 / JCM 5826 / CCUG 4940 / NBRC 14291 / NCTC 11154) (Bacteroides vulgatus).